The following is a 198-amino-acid chain: MSEQEQKVEIPEVEKQEEVVVEETQQAEHSQEFDPLEEAIARVQELEEQLKTQIEEAANKEQDILLRSRAEIENLRRRTEQDVEKAHKFALEKFSKDILNTIDNLERALATPANKEDESVKALFDGVELTLKELVSTVGRFGVEAVGVVGEAFNPDLHQAISMQPAEGFETNQISVVLQKGYTLNGRVIRPAMVMVAA.

Residues 1 to 18 are compositionally biased toward basic and acidic residues; the sequence is MSEQEQKVEIPEVEKQEE. Positions 1 to 33 are disordered; that stretch reads MSEQEQKVEIPEVEKQEEVVVEETQQAEHSQEF.

The protein belongs to the GrpE family. In terms of assembly, homodimer.

The protein localises to the cytoplasm. Its function is as follows. Participates actively in the response to hyperosmotic and heat shock by preventing the aggregation of stress-denatured proteins, in association with DnaK and GrpE. It is the nucleotide exchange factor for DnaK and may function as a thermosensor. Unfolded proteins bind initially to DnaJ; upon interaction with the DnaJ-bound protein, DnaK hydrolyzes its bound ATP, resulting in the formation of a stable complex. GrpE releases ADP from DnaK; ATP binding to DnaK triggers the release of the substrate protein, thus completing the reaction cycle. Several rounds of ATP-dependent interactions between DnaJ, DnaK and GrpE are required for fully efficient folding. This Haemophilus influenzae (strain ATCC 51907 / DSM 11121 / KW20 / Rd) protein is Protein GrpE.